The chain runs to 842 residues: Alanine--tRNA ligase (842 aa).

Zn(2+)-binding residues include His549, His553, Cys650, and His654.

Belongs to the class-II aminoacyl-tRNA synthetase family. Zn(2+) is required as a cofactor.

It localises to the cytoplasm. It carries out the reaction tRNA(Ala) + L-alanine + ATP = L-alanyl-tRNA(Ala) + AMP + diphosphate. In terms of biological role, catalyzes the attachment of alanine to tRNA(Ala) in a two-step reaction: alanine is first activated by ATP to form Ala-AMP and then transferred to the acceptor end of tRNA(Ala). Also edits incorrectly charged Ser-tRNA(Ala) and Gly-tRNA(Ala) via its editing domain. The chain is Alanine--tRNA ligase from Campylobacter jejuni subsp. jejuni serotype O:23/36 (strain 81-176).